The following is a 461-amino-acid chain: MTKKTWSDRFEGTLHPAIALFNASIGFDIELIEYDLDGSIAHGKMLAKTGIISPGEAEQLVQGLEQIRQEYRAGNFNPGVDQEDVHFAVERRLTELVGDVGKKLHTARSRNDQVGTDVRLYLRAQIDDIRQRLRDFQAVLLQLAETNVETLIPGYTHLQRAQPVSLAHHLLAYFQMAQRDWQRLGEIRARTNVSPLGSGALAGTTFPIDRHYSAELLGFAGVYANSLDGVSDRDFAIEFLNAASLIMVHLSRLSEEMILWASQEFSFISLTDSCATGSSIMPQKKNPDVPELIRGKAGRVMGHLQGMLVLMKGLPLAYNKDLQEDKEALFDAVKTVQVSLEAMTILLDEGIVFRQERLAEAVAEDFSNATDVADYLAAKGVPFREAYNLVGKVVKTSLAAGKLLKDLTLAEWQALHPAFEEDIYQAITPQQVVAARNSYGGTGFEQVKMAIANAKAELSQT.

This sequence belongs to the lyase 1 family. Argininosuccinate lyase subfamily.

It is found in the cytoplasm. The catalysed reaction is 2-(N(omega)-L-arginino)succinate = fumarate + L-arginine. It participates in amino-acid biosynthesis; L-arginine biosynthesis; L-arginine from L-ornithine and carbamoyl phosphate: step 3/3. With respect to regulation, strongly inhibited by L-arginine. Inhibitory effects are lowered at pH 7.0 compared to those at pH 8.0. At 45 degrees Celsius and pH 8.0, activity decreases to 94%, 74% and 37% in the presence of 0.6 mM, 2.8 mM and 10 mM arginine, respectively. Activity also decreases to 86% in the presence of 10 mM sodium succinate or sodium citrate. Activity does not decrease in the presence of 1 mM or 10 mM L-lysine, which has a similar structure to arginine. Catalyzes the last step of arginine biosynthesis, the conversion of argininosuccinate into L-arginine and fumarate. This chain is Argininosuccinate lyase, found in Synechocystis sp. (strain ATCC 27184 / PCC 6803 / Kazusa).